The chain runs to 224 residues: Inhibitor of apoptosis protein (224 aa).

The BIR repeat unit spans residues 29–92 (VDARNQSFAI…GFWSRNCGFM (64 aa)). Positions 62, 65, 82, and 89 each coordinate Zn(2+). The C4-type zinc-finger motif lies at 189–207 (CMTCGIEPIKKDENFCNAC).

It belongs to the asfivirus IAP family. In terms of assembly, interacts with subunit p17 of host CASP3.

The protein resides in the host cytoplasm. It is found in the virion. Its function is as follows. Prevent apoptosis of host cell by inhibiting caspase-3/CASP3 activation to promote the viral replication. Also induces the activation of host NF-kappaB. In Ornithodoros (relapsing fever ticks), this protein is Inhibitor of apoptosis protein.